Consider the following 266-residue polypeptide: Metallo-beta-lactamase VIM-2 (266 aa).

A signal peptide spans 1–20 (MFKLLSKLLVYLTASIMAIA). Zn(2+) is bound by residues His-114, His-116, and Cys-198.

This sequence belongs to the metallo-beta-lactamase superfamily. Class-B beta-lactamase family. Monomer. It depends on Zn(2+) as a cofactor.

It localises to the periplasm. It carries out the reaction a beta-lactam + H2O = a substituted beta-amino acid. Inhibited by chelating agents such as EDTA. Inhibited by a fungal natural product, aspergillomarasmine A (AMA). Inhibited by 2-triazolylthioacetamides. Its function is as follows. Class B beta-lactamase which confers resistance to the beta-lactam antibiotics, including penicillins, cephalosporins and carbapenems. Acts via hydrolysis of the beta-lactam ring. Has penicillin-, cephalosporin- and carbapenem-hydrolyzing activities. The protein is Metallo-beta-lactamase VIM-2 of Escherichia coli.